The following is a 117-amino-acid chain: UPF0102 protein FTN_0424 (117 aa).

The protein belongs to the UPF0102 family.

The chain is UPF0102 protein FTN_0424 from Francisella tularensis subsp. novicida (strain U112).